Consider the following 98-residue polypeptide: Acylphosphatase (98 aa).

Residues 12–98 (TYYVRVRGVV…EKRFERFQQQ (87 aa)) enclose the Acylphosphatase-like domain. Catalysis depends on residues arginine 27 and asparagine 45.

Belongs to the acylphosphatase family.

The catalysed reaction is an acyl phosphate + H2O = a carboxylate + phosphate + H(+). The protein is Acylphosphatase (acyP) of Burkholderia cenocepacia (strain HI2424).